A 316-amino-acid polypeptide reads, in one-letter code: Probable metal transport system membrane protein TC_0342 (316 aa).

10 consecutive transmembrane segments (helical) span residues methionine 1–phenylalanine 21, isoleucine 39–valine 59, alanine 64–phenylalanine 84, glutamine 94–isoleucine 114, alanine 124–leucine 144, phenylalanine 171–valine 191, valine 196–leucine 216, alanine 226–isoleucine 246, glutamate 252–serine 272, and serine 286–valine 306.

The protein belongs to the ABC-3 integral membrane protein family.

The protein localises to the cell inner membrane. In terms of biological role, part of an ATP-driven transport system TC_0338/TC_0339/TC_0341/TC_0342 for a metal. The sequence is that of Probable metal transport system membrane protein TC_0342 from Chlamydia muridarum (strain MoPn / Nigg).